The chain runs to 359 residues: Heme A synthase (359 aa).

5 helical membrane passes run 8 to 28 (IMSI…VVGG), 94 to 114 (LLGR…CYLK), 124 to 144 (LLLI…MVKS), 159 to 179 (GHLL…LIII), and 215 to 235 (IIIF…GLDA). His-274 provides a ligand contact to heme. Helical transmembrane passes span 276-296 (WFGI…IILN), 303-323 (MGMV…ITLL), and 328-348 (ILAA…FLFI). Position 334 (His-334) interacts with heme.

This sequence belongs to the COX15/CtaA family. Type 2 subfamily. Interacts with CtaB. Heme b is required as a cofactor.

The protein resides in the cell membrane. It carries out the reaction Fe(II)-heme o + 2 A + H2O = Fe(II)-heme a + 2 AH2. It functions in the pathway porphyrin-containing compound metabolism; heme A biosynthesis; heme A from heme O: step 1/1. In terms of biological role, catalyzes the conversion of heme O to heme A by two successive hydroxylations of the methyl group at C8. The first hydroxylation forms heme I, the second hydroxylation results in an unstable dihydroxymethyl group, which spontaneously dehydrates, resulting in the formyl group of heme A. The protein is Heme A synthase of Orientia tsutsugamushi (strain Boryong) (Rickettsia tsutsugamushi).